The following is a 212-amino-acid chain: Glutathione S-transferase P 1 (212 aa).

The 82-residue stretch at 2–83 (PGYVLTYFPV…YLGNKHGLTG (82 aa)) folds into the GST N-terminal domain. Residues Y8, R14, W39, K47, 54-55 (QL), and 67-68 (QS) contribute to the glutathione site. The region spanning 85 to 206 (NDEERGHIDM…KSDARNKRPI (122 aa)) is the GST C-terminal domain.

It belongs to the GST superfamily. Pi family. As to quaternary structure, homodimer. Expressed only in embryos. Not expressed in liver, lung, heart, kidney and ovary.

It localises to the cytoplasm. It is found in the mitochondrion. The protein localises to the nucleus. It carries out the reaction RX + glutathione = an S-substituted glutathione + a halide anion + H(+). In terms of biological role, conjugation of reduced glutathione to a wide number of exogenous and endogenous hydrophobic electrophiles. Highly active towards 1-chloro-2,4-dinitrobenzene and organic isothiocyanates, but shows no detectable activity towards 1,2-dichloro-4-nitrobenzene, p-nitrobenzylchloride, trans-4-phenyl-3-buten-2-one (tPBO) and ethacrynic acid. May be associated with cellular proliferation. This is Glutathione S-transferase P 1 (gstp1) from Xenopus laevis (African clawed frog).